The primary structure comprises 549 residues: S-methyl thiourocanate hydratase (549 aa).

11 residues coordinate NAD(+): Met-49, Gly-173, Met-174, Gly-175, Asp-193, Ser-198, Asn-239, Ala-240, Gln-260, Val-270, and Tyr-318.

The protein belongs to the urocanase family. S-methyl thiourocanate hydratase subfamily. NAD(+) is required as a cofactor.

It catalyses the reaction S-methyl-(E)-thiourocanate + H2O = S-methyl-thiohydantoin-5-propanoate. Functionally, hydratase involved in the catabolism of S-methyl ergothioneine. Catalyzes the 1,4-addition of H(2)O to S-methyl thiourocanate, leading to the formation of S-methyl-thiohydantoin-5-propanoate, the second step in S-methyl ergothioneine degradation. Cannot use urocanate or thiourocanate as substrate. The protein is S-methyl thiourocanate hydratase of Variovorax sp. (strain JCM 16519 / RA8).